The chain runs to 99 residues: Nucleoid-associated protein str1598 (99 aa).

It belongs to the YbaB/EbfC family. In terms of assembly, homodimer.

Its subcellular location is the cytoplasm. It is found in the nucleoid. Functionally, binds to DNA and alters its conformation. May be involved in regulation of gene expression, nucleoid organization and DNA protection. This Streptococcus thermophilus (strain CNRZ 1066) protein is Nucleoid-associated protein str1598.